Consider the following 233-residue polypeptide: Attacin-B (233 aa).

The first 17 residues, 1-17, serve as a signal peptide directing secretion; it reads MFAKLFLVSVLLVGVNS. A propeptide spanning residues 18–46 is cleaved from the precursor; it reads RYVLVEEPGYYDKQYEEQPQQWVNSRVRR.

It belongs to the attacin/sarcotoxin-2 family.

It is found in the secreted. In terms of biological role, hemolymph antibacterial protein. In Hyalophora cecropia (Cecropia moth), this protein is Attacin-B.